Reading from the N-terminus, the 520-residue chain is Cell adhesion molecule CEACAM2 (520 aa).

The signal sequence occupies residues 1-34 (MELASAHLHKGQVPWFGLLLTASLLASWSPPTTA). The 107-residue stretch at 35 to 141 (QVTVMAFPLH…RVLTGQFHVH (107 aa)) folds into the Ig-like V-type domain. Residues 35–422 (QVTVMAFPLH…IFDSTYDISD (388 aa)) lie on the Extracellular side of the membrane. N-linked (GlcNAc...) asparagine glycosylation is found at asparagine 87, asparagine 104, asparagine 148, asparagine 152, asparagine 175, asparagine 199, asparagine 206, asparagine 210, asparagine 226, asparagine 258, asparagine 290, asparagine 294, asparagine 304, asparagine 317, asparagine 333, and asparagine 361. Ig-like C2-type domains follow at residues 145–234 (LKSN…FSLN), 239–319 (PDTP…KNIT), and 327–411 (PSLQ…IKLE). Cysteine 167 and cysteine 217 are disulfide-bonded. Cysteine 261 and cysteine 301 are disulfide-bonded. A disulfide bond links cysteine 346 and cysteine 394. The helical transmembrane segment at 423–443 (VPIAVIITGAVAGVILIAGLA) threads the bilayer. Over 444 to 520 (YRLCSRKSRW…ETVYSEVKKK (77 aa)) the chain is Cytoplasmic. Positions 457–520 (QRDLTEHKPS…ETVYSEVKKK (64 aa)) are disordered. Polar residues predominate over residues 466–480 (SASNHNLAPSDNSPN). Tyrosine 487 is modified (phosphotyrosine). Polar residues predominate over residues 490–513 (LNFNSQQPNRPTSAPSSPRATETV). Residue serine 502 is modified to Phosphoserine. Tyrosine 514 carries the phosphotyrosine modification.

Belongs to the immunoglobulin superfamily. CEA family. In terms of assembly, interacts weakly with MHV spike protein in tissue culture. As to expression, isoform 2 is detected in elongating spermatids within the seminiferous epithelium (at protein level). Expressed in kidney, colon, uterus, gut mononuclear cells, crypt epithelia of intestinal tissues, and to a lesser extent, in spleen. Expressed in brain including VMH, globus pallidus, ventral pallidum, striatum, olfactory bulb and hippocampus. Also detected in rectal carcinoma cell line CMT93. Isoform 2 and isoform 3 are expressed in testis. Isoform 2 is detected in seminiferous tubule, not detected in epididymal spermatozoa. Also not observed on spermatogonia, spermatocytes, round spermatids or somatic Sertoli cells. During stages I-VII of spermatogenesis, detected on the elongating spermatids. At spermiation (stage VIII) and subsequent stages IX-XII, levels are drastically reduced or absent in the seminiferous tubules. Sometimes weakly detected in the apical region of stage-VIII seminiferous epithelium. Isoform 2 level is very low in stomach, kidney, intestine, liver and spleen.

It is found in the cell membrane. Controls energy balance and peripheral insulin action. Involved in the regulation of feeding behavior particularly in the ventromedial nucleus of hypothalamus (VMH) regulation of food intake. Has a role in the regulation of metabolic rate and insulin sensitivity or resistance via effects on brown adipogenesis, sympathetic nervous outflow to brown adipose tissue, spontaneous activity and energy expenditure in skeletal muscle. In case of murine coronavirus (MHV) infection, does probably not serve as functional receptor for the virus. Its function is as follows. Isoform 2 may be an adhesion molecule contributing to cell to cell adhesion between elongating spermatids and Sertoli cells within the seminiferous epithelium. This Mus musculus (Mouse) protein is Cell adhesion molecule CEACAM2.